The primary structure comprises 476 residues: uncharacterized protein (476 aa).

A coiled-coil region spans residues 147 to 204; it reads DVRLAELRRRRAELEAEIAAVEAGDIAVLDPTAVRDRYQQLSTTARELLSDFREVEEN.

This is an uncharacterized protein from Mycolicibacterium smegmatis (strain ATCC 700084 / mc(2)155) (Mycobacterium smegmatis).